Here is a 117-residue protein sequence, read N- to C-terminus: Anti-adapter protein IraM (117 aa).

Belongs to the IraM/RssC family.

It is found in the cytoplasm. Its function is as follows. Involved in the stabilization of the sigma stress factor RpoS. This chain is Anti-adapter protein IraM, found in Klebsiella pneumoniae (strain 342).